Here is a 242-residue protein sequence, read N- to C-terminus: Peptidyl-prolyl cis-trans isomerase FKBP20-2, chloroplastic (242 aa).

The N-terminal 31 residues, methionine 1–cysteine 31, are a transit peptide targeting the chloroplast. The transit peptide at cysteine 32–alanine 67 directs the protein to the thylakoid. One can recognise a PPIase FKBP-type domain in the interval glycine 138–glutamine 225. Residues cysteine 227 and cysteine 241 are joined by a disulfide bond.

This sequence belongs to the FKBP-type PPIase family. In terms of assembly, interacts in vitro with LTO1.

The protein localises to the plastid. The protein resides in the chloroplast thylakoid lumen. It carries out the reaction [protein]-peptidylproline (omega=180) = [protein]-peptidylproline (omega=0). PPIases accelerate the folding of proteins. It catalyzes the cis-trans isomerization of proline imidic peptide bonds in oligopeptides. Involved in the accumulation of the PSII complex. This Arabidopsis thaliana (Mouse-ear cress) protein is Peptidyl-prolyl cis-trans isomerase FKBP20-2, chloroplastic.